Here is a 538-residue protein sequence, read N- to C-terminus: Putative cysteine ligase BshC (538 aa).

Residues 460–484 adopt a coiled-coil conformation; sequence KINEQIELLERMLKRNVEKKHEVEL.

The protein belongs to the BshC family.

Involved in bacillithiol (BSH) biosynthesis. May catalyze the last step of the pathway, the addition of cysteine to glucosamine malate (GlcN-Mal) to generate BSH. This Bacillus anthracis (strain A0248) protein is Putative cysteine ligase BshC.